A 160-amino-acid polypeptide reads, in one-letter code: Ribosomal RNA large subunit methyltransferase H (160 aa).

S-adenosyl-L-methionine-binding positions include L76, G108, and 127 to 132; that span reads LGKMTW.

Belongs to the RNA methyltransferase RlmH family. In terms of assembly, homodimer.

Its subcellular location is the cytoplasm. It catalyses the reaction pseudouridine(1915) in 23S rRNA + S-adenosyl-L-methionine = N(3)-methylpseudouridine(1915) in 23S rRNA + S-adenosyl-L-homocysteine + H(+). Functionally, specifically methylates the pseudouridine at position 1915 (m3Psi1915) in 23S rRNA. This Rhizobium leguminosarum bv. trifolii (strain WSM2304) protein is Ribosomal RNA large subunit methyltransferase H.